We begin with the raw amino-acid sequence, 92 residues long: Co-chaperonin GroES (92 aa).

Belongs to the GroES chaperonin family. As to quaternary structure, heptamer of 7 subunits arranged in a ring. Interacts with the chaperonin GroEL.

The protein localises to the cytoplasm. Functionally, together with the chaperonin GroEL, plays an essential role in assisting protein folding. The GroEL-GroES system forms a nano-cage that allows encapsulation of the non-native substrate proteins and provides a physical environment optimized to promote and accelerate protein folding. GroES binds to the apical surface of the GroEL ring, thereby capping the opening of the GroEL channel. In Methanosarcina barkeri (strain Fusaro / DSM 804), this protein is Co-chaperonin GroES.